The primary structure comprises 158 residues: Transcription elongation factor GreA (158 aa).

Residues 45 to 73 (AEYHAAREQQSFIEGRIKQLESELSHAEI) are a coiled coil.

The protein belongs to the GreA/GreB family.

Its function is as follows. Necessary for efficient RNA polymerase transcription elongation past template-encoded arresting sites. The arresting sites in DNA have the property of trapping a certain fraction of elongating RNA polymerases that pass through, resulting in locked ternary complexes. Cleavage of the nascent transcript by cleavage factors such as GreA or GreB allows the resumption of elongation from the new 3'terminus. GreA releases sequences of 2 to 3 nucleotides. The polypeptide is Transcription elongation factor GreA (Xanthomonas axonopodis pv. citri (strain 306)).